The following is a 379-amino-acid chain: MILLVNGGAATSIHPNAARFYRIGTMSRQIHGAVSSSKHISLKTQHPLSDSNSELAYGASGSETRVYTRKKRLKQEPFEPLEKYSGKGVNTHKLCGLPDIEDFAYKKTIGSPSSSRSTETSITVTSVKTAGYPPENWVEVLEGIRQMRSSEDAPVDSMGCDKAGSFLPPTERRFAVLLGALLSSQTKDQVNNAAIHRLHQNGLLTPEAVDKADESTIKELIYPVGFYTRKATYMKKIARICLVKYDGDIPSSLDDLLSLPGIGPKMAHLILHIAWNDVQGICVDTHVHRICNRLGWVSRPGTKQKTTSPEETRVALQQWLPKEEWVAINPLLVGFGQMICTPIRPRCEACSVSKLCPAAFKETSSPSSKLKKSNRSKEP.

The transit peptide at 1 to 54 directs the protein to the chloroplast; that stretch reads MILLVNGGAATSIHPNAARFYRIGTMSRQIHGAVSSSKHISLKTQHPLSDSNSE. Residues 244–272 enclose the HhH domain; the sequence is KYDGDIPSSLDDLLSLPGIGPKMAHLILH. K265 (nucleophile; for N-glycosylase activity) is an active-site residue. Residues C340, C347, C350, and C356 each contribute to the [4Fe-4S] cluster site.

This sequence belongs to the Nth/MutY family. [4Fe-4S] cluster is required as a cofactor. In terms of tissue distribution, expressed at low levels in roots, stems, leaves and flowers.

Its subcellular location is the plastid. It localises to the chloroplast stroma. It is found in the chloroplast nucleoid. The catalysed reaction is 2'-deoxyribonucleotide-(2'-deoxyribose 5'-phosphate)-2'-deoxyribonucleotide-DNA = a 3'-end 2'-deoxyribonucleotide-(2,3-dehydro-2,3-deoxyribose 5'-phosphate)-DNA + a 5'-end 5'-phospho-2'-deoxyribonucleoside-DNA + H(+). Functionally, bifunctional DNA N-glycosylase with associated apurinic/apyrimidinic (AP) lyase function that catalyzes the first step in base excision repair (BER), the primary repair pathway for the repair of oxidative DNA damage. The DNA N-glycosylase activity releases the damaged DNA base from DNA by cleaving the N-glycosidic bond, leaving an AP site. The AP lyase activity cleaves the phosphodiester bond 3' to the AP site by a beta-elimination. Primarily recognizes and repairs oxidative base damage of pyrimidines. This is Endonuclease III homolog 1, chloroplastic from Arabidopsis thaliana (Mouse-ear cress).